The following is a 417-amino-acid chain: RH-like protein (417 aa).

The next 11 helical transmembrane spans lie at C12–T32, L44–F64, V77–F97, I125–V145, I172–P192, T203–F223, V238–L258, I265–C285, V287–G307, T331–V351, and M358–I378.

Belongs to the ammonium transporter (TC 2.A.49) family. Rh subfamily.

It localises to the membrane. May be part of an oligomeric complex which is likely to have a transport or channel function in the erythrocyte membrane. In Macaca mulatta (Rhesus macaque), this protein is RH-like protein.